The following is a 488-amino-acid chain: MSTPGVNSSASLSPDRLNSPVTIPAVMFIFGVVGNLVAIVVLCKSRKEQKETTFYTLVCGLAVTDLLGTLLVSPVTIATYMKGQWPGGQPLCEYSTFILLFFSLSGLSIICAMSVERYLAINHAYFYSHYVDKRLAGLTLFAVYASNVLFCALPNMGLGSSRLQYPDTWCFIDWTTNVTAHAAYSYMYAGFSSFLILATVLCNVLVCGALLRMHRQFMRRTSLGTEQHHAAAAASVASRGHPAASPALPRLSDFRRRRSFRRIAGAEIQMVILLIATSLVVLICSIPLVVRVFVNQLYQPSLEREVSKNPDLQAIRIASVNPILDPWIYILLRKTVLSKAIEKIKCLFCRIGGSRRERSGQHCSDSQRTSSAMSGHSRSFISRELKEISSTSQTLLPDLSLPDLSENGLGGRNLLPGVPGMGLAQEDTTSLRTLRISETSDSSQGQDSESVLLVDEAGGSGRAGPAPKGSSLQVTFPSETLNLSEKCI.

Topologically, residues 1 to 19 are extracellular; the sequence is MSTPGVNSSASLSPDRLNS. N-linked (GlcNAc...) asparagine glycosylation is present at Asn7. Residues 20–43 form a helical membrane-spanning segment; that stretch reads PVTIPAVMFIFGVVGNLVAIVVLC. At 44 to 55 the chain is on the cytoplasmic side; the sequence is KSRKEQKETTFY. A helical membrane pass occupies residues 56–79; that stretch reads TLVCGLAVTDLLGTLLVSPVTIAT. The Extracellular segment spans residues 80 to 96; it reads YMKGQWPGGQPLCEYST. Cys92 and Cys170 are joined by a disulfide. Residues 97-115 traverse the membrane as a helical segment; that stretch reads FILLFFSLSGLSIICAMSV. Residues 116 to 135 lie on the Cytoplasmic side of the membrane; the sequence is ERYLAINHAYFYSHYVDKRL. The helical transmembrane segment at 136-160 threads the bilayer; the sequence is AGLTLFAVYASNVLFCALPNMGLGS. The Extracellular portion of the chain corresponds to 161-184; sequence SRLQYPDTWCFIDWTTNVTAHAAY. The chain crosses the membrane as a helical span at residues 185–211; the sequence is SYMYAGFSSFLILATVLCNVLVCGALL. Residues 212 to 267 lie on the Cytoplasmic side of the membrane; sequence RMHRQFMRRTSLGTEQHHAAAAASVASRGHPAASPALPRLSDFRRRRSFRRIAGAE. Residues 268–295 traverse the membrane as a helical segment; it reads IQMVILLIATSLVVLICSIPLVVRVFVN. Over 296-312 the chain is Extracellular; sequence QLYQPSLEREVSKNPDL. A helical transmembrane segment spans residues 313 to 332; it reads QAIRIASVNPILDPWIYILL. Residues 333 to 488 are Cytoplasmic-facing; it reads RKTVLSKAIE…ETLNLSEKCI (156 aa). Residues 356–376 are disordered; the sequence is RERSGQHCSDSQRTSSAMSGH. Residues 361–376 are compositionally biased toward polar residues; that stretch reads QHCSDSQRTSSAMSGH. Residues Ser374, Ser377, Ser379, and Ser382 each carry the phosphoserine modification. Over residues 437–449 the composition is skewed to polar residues; the sequence is SETSDSSQGQDSE. The disordered stretch occupies residues 437–475; it reads SETSDSSQGQDSESVLLVDEAGGSGRAGPAPKGSSLQVT.

It belongs to the G-protein coupled receptor 1 family. As to quaternary structure, interacts with FEM1A. In terms of processing, phosphorylation mediates agonist-mediated desensitization by promoting cytoplasmic retention. As to expression, high in intestine and in peripheral blood mononuclear cells; low in lung, kidney, thymus, uterus, vasculature and brain. Not found in liver, heart, retina oe skeletal muscle.

Its subcellular location is the cell membrane. Receptor for prostaglandin E2 (PGE2). The activity of this receptor is mediated by G(s) proteins that stimulate adenylate cyclase. Has a relaxing effect on smooth muscle. May play an important role in regulating renal hemodynamics, intestinal epithelial transport, adrenal aldosterone secretion, and uterine function. This chain is Prostaglandin E2 receptor EP4 subtype (PTGER4), found in Homo sapiens (Human).